A 329-amino-acid polypeptide reads, in one-letter code: 4-hydroxythreonine-4-phosphate dehydrogenase (329 aa).

Positions 136 and 137 each coordinate substrate. Residues His-166, His-211, and His-266 each contribute to the a divalent metal cation site. Substrate is bound by residues Lys-274, Asn-283, and Arg-292.

This sequence belongs to the PdxA family. Homodimer. Requires Zn(2+) as cofactor. The cofactor is Mg(2+). It depends on Co(2+) as a cofactor.

The protein localises to the cytoplasm. It catalyses the reaction 4-(phosphooxy)-L-threonine + NAD(+) = 3-amino-2-oxopropyl phosphate + CO2 + NADH. The protein operates within cofactor biosynthesis; pyridoxine 5'-phosphate biosynthesis; pyridoxine 5'-phosphate from D-erythrose 4-phosphate: step 4/5. Its function is as follows. Catalyzes the NAD(P)-dependent oxidation of 4-(phosphooxy)-L-threonine (HTP) into 2-amino-3-oxo-4-(phosphooxy)butyric acid which spontaneously decarboxylates to form 3-amino-2-oxopropyl phosphate (AHAP). This is 4-hydroxythreonine-4-phosphate dehydrogenase from Escherichia coli O81 (strain ED1a).